The chain runs to 201 residues: Recombination protein RecR (201 aa).

A C4-type zinc finger spans residues 59 to 74; the sequence is CEICGNMDTENMCRIC. Positions 82 to 177 constitute a Toprim domain; it reads SIIAIVETVA…KISRLASGIP (96 aa).

Belongs to the RecR family.

May play a role in DNA repair. It seems to be involved in an RecBC-independent recombinational process of DNA repair. It may act with RecF and RecO. The protein is Recombination protein RecR of Rickettsia conorii (strain ATCC VR-613 / Malish 7).